A 519-amino-acid chain; its full sequence is Keratin, type II cytoskeletal 1b (519 aa).

The tract at residues 1–166 (MSRQFSSQSA…DPEIQKIKTQ (166 aa)) is head. Residues Arg81 and Arg95 each carry the omega-N-methylarginine modification. The coil 1A stretch occupies residues 167–202 (EREQIKTLNNKFASFIDKVRFLEQQNQVLQTKWELL). The 314-residue stretch at 167 to 480 (EREQIKTLNN…ELLEGEESRM (314 aa)) folds into the IF rod domain. Positions 203 to 221 (QQVNTSTRTSSLEPIFEEF) are linker 1. Residues 222–313 (INQLQRQVDV…YLFDTELSQI (92 aa)) form a coil 1B region. The interval 314–337 (QTHVSDTNVILSMDNNRSLDLDSI) is linker 12. Positions 338 to 476 (INAVRTQYEL…ATYRELLEGE (139 aa)) are coil 2. The interval 477–519 (ESRMSGALQSQVSIWALPSNEGNDLGERLHDPQSQVPVPKLGC) is tail. The segment at 499-519 (NDLGERLHDPQSQVPVPKLGC) is disordered.

This sequence belongs to the intermediate filament family. In terms of processing, undergoes deimination of some arginine residues (citrullination).

The chain is Keratin, type II cytoskeletal 1b (Krt77) from Rattus norvegicus (Rat).